A 945-amino-acid polypeptide reads, in one-letter code: Probable inorganic carbon transporter subunit DabA (945 aa).

Residues Cys-408, Asp-410, His-651, and Cys-666 each contribute to the Zn(2+) site.

The protein belongs to the inorganic carbon transporter (TC 9.A.2) DabA family. As to quaternary structure, forms a complex with DabB. It depends on Zn(2+) as a cofactor.

The protein resides in the cell inner membrane. Its function is as follows. Part of an energy-coupled inorganic carbon pump. This chain is Probable inorganic carbon transporter subunit DabA, found in Sulfurihydrogenibium azorense (strain DSM 15241 / OCM 825 / Az-Fu1).